The chain runs to 569 residues: Serine/threonine-protein kinase gad8 (569 aa).

A disordered region spans residues 19–63; that stretch reads GLNSGGSSFTRGLKNSTLSSTSSRKSSDEKSRKSSEDKRSPQSTV. Low complexity predominate over residues 31–42; that stretch reads LKNSTLSSTSSR. Residues 43–58 show a composition bias toward basic and acidic residues; the sequence is KSSDEKSRKSSEDKRS. The C2 domain maps to 45-202; sequence SDEKSRKSSE…IVNKLTDEWV (158 aa). Positions 230–485 constitute a Protein kinase domain; it reads FELLKVVGKG…AQEIKNHPFF (256 aa). ATP contacts are provided by residues 236 to 244 and Lys-259; that span reads VGKGSFGKV. Asp-353 (proton acceptor) is an active-site residue. Thr-387 carries the phosphothreonine; by ksg1 modification. Residues 486–557 form the AGC-kinase C-terminal domain; the sequence is DDIDWKKLCA…QRPTTIDTSD (72 aa). A phosphoserine; by TORC2 mark is found at Ser-527 and Ser-546.

The protein belongs to the protein kinase superfamily. AGC Ser/Thr protein kinase family. Post-translationally, phosphorylated by ksg1 and target of rapamycin complex 2 (TORC2), affecting the kinase activity of gad8 in a nutrient-dependent manner.

The enzyme catalyses L-seryl-[protein] + ATP = O-phospho-L-seryl-[protein] + ADP + H(+). It carries out the reaction L-threonyl-[protein] + ATP = O-phospho-L-threonyl-[protein] + ADP + H(+). In terms of biological role, involved in a signaling module for sexual development and cell growth under stressed conditions. Required for G1 arrest under nitrogen starvation and for growth at high temperature and osmolarity. This Schizosaccharomyces pombe (strain 972 / ATCC 24843) (Fission yeast) protein is Serine/threonine-protein kinase gad8.